The primary structure comprises 466 residues: Ornithine decarboxylase (466 aa).

Position 116 is an N6-(pyridoxal phosphate)lysine (Lys116). Pyridoxal 5'-phosphate is bound by residues Ser247, Gly286, and 318–321 (EPGR). 362–363 (FD) provides a ligand contact to substrate. Residue Cys411 is the Proton donor; shared with dimeric partner of the active site. Asp412 serves as a coordination point for substrate. Pyridoxal 5'-phosphate is bound at residue Tyr441.

Belongs to the Orn/Lys/Arg decarboxylase class-II family. In terms of assembly, homodimer. Only the dimer is catalytically active, as the active sites are constructed of residues from both monomers. Requires pyridoxal 5'-phosphate as cofactor.

The protein resides in the cytoplasm. The catalysed reaction is L-ornithine + H(+) = putrescine + CO2. The protein operates within amine and polyamine biosynthesis; putrescine biosynthesis via L-ornithine pathway; putrescine from L-ornithine: step 1/1. With respect to regulation, inhibited by antizyme (AZ) OAZ1 in response to polyamine levels. AZ inhibits the assembly of the functional homodimer by binding to ODC monomers and targeting them for ubiquitin-independent proteolytic destruction by the 26S proteasome. Functionally, catalyzes the first and rate-limiting step of polyamine biosynthesis that converts ornithine into putrescine, which is the precursor for the polyamines, spermidine and spermine. Polyamines are essential for cell proliferation and are implicated in cellular processes, ranging from DNA replication to apoptosis. The polypeptide is Ornithine decarboxylase (Saccharomyces cerevisiae (strain ATCC 204508 / S288c) (Baker's yeast)).